The following is a 254-amino-acid chain: Galactitol 2-dehydrogenase (L-tagatose-forming) (254 aa).

Residues 21-23 (SGI), aspartate 42, 66-67 (DV), tyrosine 159, lysine 163, and 192-194 (VAT) each bind NAD(+). The Proton acceptor role is filled by tyrosine 159. Tryptophan 254 lines the Mg(2+) pocket.

The protein belongs to the short-chain dehydrogenases/reductases (SDR) family. In terms of assembly, homotetramer. It depends on a divalent metal cation as a cofactor.

The enzyme catalyses galactitol + NAD(+) = keto-L-tagatose + NADH + H(+). Its activity is regulated as follows. Inhibited by the chelating agents EDTA and alpha,alpha'-dipyridyl. Inhibited by Zn(2+) and Fe(2+). Its function is as follows. Catalyzes the interconversion of galactitol to the rare sugar L-tagatose. Shows activity with a wide range of substrates, and catalyzes the oxidation of a variety of polyvalent aliphatic alcohols and polyols to the corresponding ketones and ketoses, respectively, and in the reverse reaction, it reduces ketones with high stereoselectivity yielding the corresponding S-configurated alcohols. Shows high activity with D-threitol, xylitol, 1,2-hexanediol, 1,2-pentanediol, 2-hexanol, L-erythrulose, D-ribulose and acetoin. Specific for NAD(+). This is Galactitol 2-dehydrogenase (L-tagatose-forming) from Cereibacter sphaeroides (Rhodobacter sphaeroides).